A 200-amino-acid chain; its full sequence is 3-isopropylmalate dehydratase small subunit (200 aa).

This sequence belongs to the LeuD family. LeuD type 1 subfamily. Heterodimer of LeuC and LeuD.

It carries out the reaction (2R,3S)-3-isopropylmalate = (2S)-2-isopropylmalate. It participates in amino-acid biosynthesis; L-leucine biosynthesis; L-leucine from 3-methyl-2-oxobutanoate: step 2/4. Catalyzes the isomerization between 2-isopropylmalate and 3-isopropylmalate, via the formation of 2-isopropylmaleate. This Yersinia pseudotuberculosis serotype O:1b (strain IP 31758) protein is 3-isopropylmalate dehydratase small subunit.